We begin with the raw amino-acid sequence, 220 residues long: Protein-L-isoaspartate O-methyltransferase (220 aa).

Ser-68 is a catalytic residue.

Belongs to the methyltransferase superfamily. L-isoaspartyl/D-aspartyl protein methyltransferase family.

It localises to the cytoplasm. It carries out the reaction [protein]-L-isoaspartate + S-adenosyl-L-methionine = [protein]-L-isoaspartate alpha-methyl ester + S-adenosyl-L-homocysteine. In terms of biological role, catalyzes the methyl esterification of L-isoaspartyl residues in peptides and proteins that result from spontaneous decomposition of normal L-aspartyl and L-asparaginyl residues. It plays a role in the repair and/or degradation of damaged proteins. The sequence is that of Protein-L-isoaspartate O-methyltransferase from Dictyoglomus thermophilum (strain ATCC 35947 / DSM 3960 / H-6-12).